The following is a 330-amino-acid chain: Methionyl-tRNA formyltransferase (330 aa).

A (6S)-5,6,7,8-tetrahydrofolate-binding site is contributed by 116 to 119; it reads SLLP.

The protein belongs to the Fmt family.

It catalyses the reaction L-methionyl-tRNA(fMet) + (6R)-10-formyltetrahydrofolate = N-formyl-L-methionyl-tRNA(fMet) + (6S)-5,6,7,8-tetrahydrofolate + H(+). In terms of biological role, attaches a formyl group to the free amino group of methionyl-tRNA(fMet). The formyl group appears to play a dual role in the initiator identity of N-formylmethionyl-tRNA by promoting its recognition by IF2 and preventing the misappropriation of this tRNA by the elongation apparatus. The protein is Methionyl-tRNA formyltransferase of Nitratidesulfovibrio vulgaris (strain DP4) (Desulfovibrio vulgaris).